The chain runs to 131 residues: Small ribosomal subunit protein bS6 (131 aa).

Residues 98–131 (EASPMVKAKDERRERREDFANETADDSEAGDSEE) form a disordered region. Basic and acidic residues predominate over residues 104–116 (KAKDERRERREDF). Over residues 120-131 (TADDSEAGDSEE) the composition is skewed to acidic residues.

The protein belongs to the bacterial ribosomal protein bS6 family.

Binds together with bS18 to 16S ribosomal RNA. In Klebsiella pneumoniae subsp. pneumoniae (strain ATCC 700721 / MGH 78578), this protein is Small ribosomal subunit protein bS6.